Reading from the N-terminus, the 389-residue chain is Acyl-[acyl-carrier-protein] dehydrogenase MbtN (389 aa).

This sequence belongs to the acyl-CoA dehydrogenase family. It depends on FAD as a cofactor.

Its pathway is siderophore biosynthesis; mycobactin biosynthesis. In terms of biological role, catalyzes the dehydrogenation at the alpha-beta position of ACP-bound acyl chains. This results in the introduction of a double bond in the lipidic chain, which is further transferred to the epsilon-amino group of lysine residue in the mycobactin core by MbtK. This is Acyl-[acyl-carrier-protein] dehydrogenase MbtN (mbtN) from Mycobacterium sp. (strain MCS).